Reading from the N-terminus, the 268-residue chain is 4-hydroxy-tetrahydrodipicolinate reductase (268 aa).

Residues 10–15, D36, 99–101, and 123–126 each bind NAD(+); these read GASGRM, GTT, and APNM. Catalysis depends on H156, which acts as the Proton donor/acceptor. H157 contributes to the (S)-2,3,4,5-tetrahydrodipicolinate binding site. The active-site Proton donor is K160. 166–167 provides a ligand contact to (S)-2,3,4,5-tetrahydrodipicolinate; the sequence is GT.

The protein belongs to the DapB family.

Its subcellular location is the cytoplasm. It catalyses the reaction (S)-2,3,4,5-tetrahydrodipicolinate + NAD(+) + H2O = (2S,4S)-4-hydroxy-2,3,4,5-tetrahydrodipicolinate + NADH + H(+). The catalysed reaction is (S)-2,3,4,5-tetrahydrodipicolinate + NADP(+) + H2O = (2S,4S)-4-hydroxy-2,3,4,5-tetrahydrodipicolinate + NADPH + H(+). The protein operates within amino-acid biosynthesis; L-lysine biosynthesis via DAP pathway; (S)-tetrahydrodipicolinate from L-aspartate: step 4/4. Functionally, catalyzes the conversion of 4-hydroxy-tetrahydrodipicolinate (HTPA) to tetrahydrodipicolinate. The polypeptide is 4-hydroxy-tetrahydrodipicolinate reductase (Janthinobacterium sp. (strain Marseille) (Minibacterium massiliensis)).